We begin with the raw amino-acid sequence, 278 residues long: Probable endonuclease 4 (278 aa).

9 residues coordinate Zn(2+): H69, H109, E145, D179, H182, H214, D227, H229, and E259.

It belongs to the AP endonuclease 2 family. Requires Zn(2+) as cofactor.

The catalysed reaction is Endonucleolytic cleavage to 5'-phosphooligonucleotide end-products.. Functionally, endonuclease IV plays a role in DNA repair. It cleaves phosphodiester bonds at apurinic or apyrimidinic (AP) sites, generating a 3'-hydroxyl group and a 5'-terminal sugar phosphate. The sequence is that of Probable endonuclease 4 from Bacteroides fragilis (strain ATCC 25285 / DSM 2151 / CCUG 4856 / JCM 11019 / LMG 10263 / NCTC 9343 / Onslow / VPI 2553 / EN-2).